The primary structure comprises 122 residues: Diacylglycerol kinase (122 aa).

Arg10 and Tyr17 together coordinate ATP. Residues Arg10, 14 to 19 (AAGYSW), and 23 to 26 (RAAW) each bind substrate. ATP is bound at residue Glu29. Residue Glu29 coordinates a divalent metal cation. Substrate-binding positions include 31–35 (AFRQE), 48–51 (WLDV), Arg56, and Glu70. The helical transmembrane segment at 35 to 55 (EGVAVLLAVVIACWLDVDAIT) threads the bilayer. A helical transmembrane segment spans residues 57-77 (VLLISSVMLVMIVEILNSAIE). Glu70 acts as the Proton acceptor in catalysis. ATP-binding positions include Glu77, 86–88 (EYH), and 95–96 (KD). An a divalent metal cation-binding site is contributed by Glu77. The chain crosses the membrane as a helical span at residues 98–118 (GSAAVLIAIIVAVITWCILLW). Substrate is bound by residues Ser99 and 113–118 (WCILLW).

It belongs to the bacterial diacylglycerol kinase family. Mg(2+) is required as a cofactor.

The protein resides in the cell inner membrane. The enzyme catalyses a 1,2-diacyl-sn-glycerol + ATP = a 1,2-diacyl-sn-glycero-3-phosphate + ADP + H(+). In terms of biological role, catalyzes the ATP-dependent phosphorylation of sn-l,2-diacylglycerol (DAG) to phosphatidic acid. Involved in the recycling of diacylglycerol produced as a by-product during membrane-derived oligosaccharide (MDO) biosynthesis. The protein is Diacylglycerol kinase (dgkA) of Shigella flexneri.